A 462-amino-acid polypeptide reads, in one-letter code: Cysteine--tRNA ligase (462 aa).

Position 29 (Cys29) interacts with Zn(2+). Positions 31 to 41 match the 'HIGH' region motif; the sequence is PTVYDHAHIGN. Zn(2+) is bound by residues Cys214, His239, and Glu243. A 'KMSKS' region motif is present at residues 272–276; that stretch reads KMSKS. Lys275 lines the ATP pocket.

The protein belongs to the class-I aminoacyl-tRNA synthetase family. As to quaternary structure, monomer. It depends on Zn(2+) as a cofactor.

It localises to the cytoplasm. It carries out the reaction tRNA(Cys) + L-cysteine + ATP = L-cysteinyl-tRNA(Cys) + AMP + diphosphate. In Azorhizobium caulinodans (strain ATCC 43989 / DSM 5975 / JCM 20966 / LMG 6465 / NBRC 14845 / NCIMB 13405 / ORS 571), this protein is Cysteine--tRNA ligase.